A 64-amino-acid chain; its full sequence is Large ribosomal subunit protein bL28 (64 aa).

This sequence belongs to the bacterial ribosomal protein bL28 family.

The sequence is that of Large ribosomal subunit protein bL28 from Mycoplasmoides gallisepticum (strain R(low / passage 15 / clone 2)) (Mycoplasma gallisepticum).